The primary structure comprises 271 residues: Colicin-M (271 aa).

The TonB box signature appears at 2–9 (ETLTVHAP).

Functionally, colicins are polypeptide toxins produced by and active against E.coli and closely related bacteria. This is a calcium-requiring inhibitor for murein biosynthesis; it causes lysis of sensitive cells accompanied by murein degradation. The target site is possibly the cytoplasmic membrane. The protein is Colicin-M (cma) of Escherichia coli.